Here is a 98-residue protein sequence, read N- to C-terminus: NADH-ubiquinone oxidoreductase chain 4L (98 aa).

A run of 3 helical transmembrane segments spans residues 1–21 (MSPI…GMLV), 26–46 (LMAS…MIAL), and 61–81 (IILL…LVSI).

This sequence belongs to the complex I subunit 4L family. Core subunit of respiratory chain NADH dehydrogenase (Complex I) which is composed of 45 different subunits.

It localises to the mitochondrion inner membrane. It catalyses the reaction a ubiquinone + NADH + 5 H(+)(in) = a ubiquinol + NAD(+) + 4 H(+)(out). In terms of biological role, core subunit of the mitochondrial membrane respiratory chain NADH dehydrogenase (Complex I) which catalyzes electron transfer from NADH through the respiratory chain, using ubiquinone as an electron acceptor. Part of the enzyme membrane arm which is embedded in the lipid bilayer and involved in proton translocation. The sequence is that of NADH-ubiquinone oxidoreductase chain 4L (MT-ND4L) from Chlorocebus sabaeus (Green monkey).